Reading from the N-terminus, the 647-residue chain is Calmodulin-binding protein 60 B (647 aa).

Positions 1-10 (MMDSGNNNMN) are enriched in polar residues. Positions 1 to 26 (MMDSGNNNMNRAKRNLDGNDDDQPER) are disordered. The segment at 8 to 85 (NMNRAKRNLD…TGSSGSSPKR (78 aa)) is calmodulin-binding. Residues 12–19 (AKRNLDGN) carry the Nuclear localization signal motif. The segment at 155 to 278 (EDDEDWTQEE…AFHKKLTAEG (124 aa)) is DNA-binding.

This sequence belongs to the plant ACBP60 protein family. In terms of assembly, interacts with calmodulin (CaM). Expressed in leaves, stems, flowers, developing seeds and root.

The protein localises to the nucleus. Functionally, transcription activator that binds DNA in a sequence-specific manner, likely 5'-GAAATTTTGG-3', to promote the expression of target genes. The protein is Calmodulin-binding protein 60 B of Arabidopsis thaliana (Mouse-ear cress).